The sequence spans 433 residues: ATP-dependent protease ATPase subunit HslU (433 aa).

Residues Val-18, 60 to 65 (GVGKTE), Asp-246, Glu-311, and Arg-383 each bind ATP.

Belongs to the ClpX chaperone family. HslU subfamily. In terms of assembly, a double ring-shaped homohexamer of HslV is capped on each side by a ring-shaped HslU homohexamer. The assembly of the HslU/HslV complex is dependent on binding of ATP.

The protein resides in the cytoplasm. In terms of biological role, ATPase subunit of a proteasome-like degradation complex; this subunit has chaperone activity. The binding of ATP and its subsequent hydrolysis by HslU are essential for unfolding of protein substrates subsequently hydrolyzed by HslV. HslU recognizes the N-terminal part of its protein substrates and unfolds these before they are guided to HslV for hydrolysis. This chain is ATP-dependent protease ATPase subunit HslU, found in Nitrobacter hamburgensis (strain DSM 10229 / NCIMB 13809 / X14).